Here is a 340-residue protein sequence, read N- to C-terminus: Glycerol-3-phosphate dehydrogenase [NAD(P)+] (340 aa).

Residues serine 15, tyrosine 16, histidine 36, and lysine 110 each contribute to the NADPH site. Sn-glycerol 3-phosphate contacts are provided by lysine 110, glycine 139, and threonine 141. Alanine 143 is an NADPH binding site. Sn-glycerol 3-phosphate-binding residues include lysine 196, aspartate 249, serine 259, arginine 260, and asparagine 261. The Proton acceptor role is filled by lysine 196. Arginine 260 provides a ligand contact to NADPH. NADPH is bound by residues valine 284 and glutamate 286.

This sequence belongs to the NAD-dependent glycerol-3-phosphate dehydrogenase family.

It localises to the cytoplasm. It catalyses the reaction sn-glycerol 3-phosphate + NAD(+) = dihydroxyacetone phosphate + NADH + H(+). The enzyme catalyses sn-glycerol 3-phosphate + NADP(+) = dihydroxyacetone phosphate + NADPH + H(+). Its pathway is membrane lipid metabolism; glycerophospholipid metabolism. Functionally, catalyzes the reduction of the glycolytic intermediate dihydroxyacetone phosphate (DHAP) to sn-glycerol 3-phosphate (G3P), the key precursor for phospholipid synthesis. The sequence is that of Glycerol-3-phosphate dehydrogenase [NAD(P)+] from Serratia marcescens.